The chain runs to 223 residues: RNA-free ribonuclease P (223 aa).

Belongs to the HARP family.

The catalysed reaction is Endonucleolytic cleavage of RNA, removing 5'-extranucleotides from tRNA precursor.. In terms of biological role, RNA-free RNase P that catalyzes the removal of the 5'-leader sequence from pre-tRNA to produce the mature 5'-terminus. The sequence is that of RNA-free ribonuclease P from Methanococcus maripaludis (strain DSM 14266 / JCM 13030 / NBRC 101832 / S2 / LL).